A 66-amino-acid chain; its full sequence is Large ribosomal subunit protein bL33c (66 aa).

The protein belongs to the bacterial ribosomal protein bL33 family.

The protein localises to the plastid. It is found in the chloroplast. The protein is Large ribosomal subunit protein bL33c of Agrostis stolonifera (Creeping bentgrass).